Here is a 164-residue protein sequence, read N- to C-terminus: NADH-quinone oxidoreductase subunit I (164 aa).

4Fe-4S ferredoxin-type domains lie at 56-85 (RRYE…IEAE) and 95-124 (TRYD…EGPN). Residues Cys65, Cys68, Cys71, Cys75, Cys104, Cys107, Cys110, and Cys114 each contribute to the [4Fe-4S] cluster site.

This sequence belongs to the complex I 23 kDa subunit family. As to quaternary structure, NDH-1 is composed of 14 different subunits. Subunits NuoA, H, J, K, L, M, N constitute the membrane sector of the complex. It depends on [4Fe-4S] cluster as a cofactor.

It is found in the cell inner membrane. It carries out the reaction a quinone + NADH + 5 H(+)(in) = a quinol + NAD(+) + 4 H(+)(out). Its function is as follows. NDH-1 shuttles electrons from NADH, via FMN and iron-sulfur (Fe-S) centers, to quinones in the respiratory chain. The immediate electron acceptor for the enzyme in this species is believed to be ubiquinone. Couples the redox reaction to proton translocation (for every two electrons transferred, four hydrogen ions are translocated across the cytoplasmic membrane), and thus conserves the redox energy in a proton gradient. This chain is NADH-quinone oxidoreductase subunit I, found in Anaplasma phagocytophilum (strain HZ).